A 605-amino-acid chain; its full sequence is Glucose oxidase (605 aa).

An N-terminal signal peptide occupies residues 1–18; the sequence is MVSVFLSTLLLAAATVQA. Residues leucine 52, threonine 53, and glutamate 73 each contribute to the FAD site. N-linked (GlcNAc...) asparagine glycosylation occurs at asparagine 111. Positions 125, 129, 130, and 132 each coordinate FAD. Asparagine 183 and asparagine 190 each carry an N-linked (GlcNAc...) asparagine glycan. Cysteines 186 and 228 form a disulfide. Valine 272 is a binding site for FAD. Asparagine 335, asparagine 375, asparagine 410, and asparagine 519 each carry an N-linked (GlcNAc...) asparagine glycan. The active-site Proton acceptor is histidine 538. O2 contacts are provided by lysine 559 and valine 560. Positions 571 and 583 each coordinate FAD.

This sequence belongs to the GMC oxidoreductase family. As to quaternary structure, homodimer. FAD serves as cofactor.

It is found in the secreted. Its subcellular location is the cell wall. The protein resides in the cytoplasmic vesicle. The catalysed reaction is beta-D-glucose + O2 = D-glucono-1,5-lactone + H2O2. Its function is as follows. Glucose oxidase catalyzes the oxidation of beta-D-glucose to D-glucono-delta-lactone and hydrogen peroxide in the presence of molecular oxygen. D-glucono-delta-lactone is sequentially hydrolyzed by lactonase to D-gluconic acid, and the resulting hydrogen peroxide is hydrolyzed by catalase to oxygen and water. Glucose oxidase alone indirectly causes toxicity in the presence of glucose and is the active compound of the antifungal antibiotic talaron. Responsible for inhibition of germination of microsclerotia of Verticillium dahliae. The sequence is that of Glucose oxidase from Talaromyces flavus.